Here is a 95-residue protein sequence, read N- to C-terminus: UPF0235 protein A2cp1_1215 (95 aa).

Belongs to the UPF0235 family.

The protein is UPF0235 protein A2cp1_1215 of Anaeromyxobacter dehalogenans (strain 2CP-1 / ATCC BAA-258).